Here is a 365-residue protein sequence, read N- to C-terminus: UDP-N-acetylglucosamine--N-acetylmuramyl-(pentapeptide) pyrophosphoryl-undecaprenol N-acetylglucosamine transferase (365 aa).

UDP-N-acetyl-alpha-D-glucosamine contacts are provided by residues 10 to 12 (TAG), Asn124, Arg161, Ser195, Ile248, and Gln292.

Belongs to the glycosyltransferase 28 family. MurG subfamily.

The protein resides in the cell membrane. The enzyme catalyses di-trans,octa-cis-undecaprenyl diphospho-N-acetyl-alpha-D-muramoyl-L-alanyl-D-glutamyl-meso-2,6-diaminopimeloyl-D-alanyl-D-alanine + UDP-N-acetyl-alpha-D-glucosamine = di-trans,octa-cis-undecaprenyl diphospho-[N-acetyl-alpha-D-glucosaminyl-(1-&gt;4)]-N-acetyl-alpha-D-muramoyl-L-alanyl-D-glutamyl-meso-2,6-diaminopimeloyl-D-alanyl-D-alanine + UDP + H(+). It participates in cell wall biogenesis; peptidoglycan biosynthesis. Its function is as follows. Cell wall formation. Catalyzes the transfer of a GlcNAc subunit on undecaprenyl-pyrophosphoryl-MurNAc-pentapeptide (lipid intermediate I) to form undecaprenyl-pyrophosphoryl-MurNAc-(pentapeptide)GlcNAc (lipid intermediate II). This chain is UDP-N-acetylglucosamine--N-acetylmuramyl-(pentapeptide) pyrophosphoryl-undecaprenol N-acetylglucosamine transferase, found in Nocardioides sp. (strain ATCC BAA-499 / JS614).